We begin with the raw amino-acid sequence, 108 residues long: uncharacterized protein (108 aa).

3 helical membrane-spanning segments follow: residues 4–24 (IIFLFRAIWLALSLLILFFSM), 46–66 (GMMVICFPTGIVFFIALIFIG), and 81–101 (IMAIIIWLYFLSGGYIQWFVL).

The protein resides in the cell membrane. This is an uncharacterized protein from Escherichia coli O157:H7.